Reading from the N-terminus, the 1500-residue chain is Synaptonemal complex protein 2 (1500 aa).

2 positions are modified to phosphoserine: Ser-457 and Ser-458. Thr-464 carries the post-translational modification Phosphothreonine. Phosphoserine is present on Ser-487. Thr-496 is modified (phosphothreonine). A phosphoserine mark is found at Ser-500, Ser-509, Ser-518, and Ser-527. The segment at 512–548 is disordered; it reads KAVSKTSESGMDYAASPKSRQSDGRKRWNNRANHNKT. 2 positions are modified to phosphothreonine: Thr-608 and Thr-633. 3 positions are modified to phosphoserine: Ser-646, Ser-650, and Ser-741. The tract at residues 796–820 is disordered; sequence NPSDSMMSTRKLKEPQDGSGFSKKP. A Phosphoserine modification is found at Ser-914. The residue at position 916 (Thr-916) is a Phosphothreonine. Disordered stretches follow at residues 940–1010 and 1029–1084; these read LMDY…TSES and KEET…SASV. Residues 948-958 show a composition bias toward basic residues; that stretch reads NTTKYKSRKSR. Over residues 977–989 the composition is skewed to basic and acidic residues; sequence MKNDYEVVVDGRT. Residues 990 to 1000 show a composition bias toward basic residues; sequence RLPRRATKTKK. Basic and acidic residues predominate over residues 1059 to 1076; the sequence is PSEEQKNSSRLREGREDS. A phosphoserine mark is found at Ser-1115, Ser-1117, Ser-1124, Ser-1133, Ser-1140, Ser-1144, Ser-1156, Ser-1159, and Ser-1164. Thr-1168 carries the phosphothreonine modification. Ser-1183, Ser-1213, and Ser-1216 each carry phosphoserine. The disordered stretch occupies residues 1208–1234; the sequence is YMEPESPESCDNHMQNKREGNHAASPL. Over residues 1217–1228 the composition is skewed to basic and acidic residues; that stretch reads CDNHMQNKREGN. Residues Ser-1232, Ser-1275, and Ser-1277 each carry the phosphoserine modification. Phosphothreonine is present on Thr-1313. Residues 1388–1429 adopt a coiled-coil conformation; the sequence is LLDELEKVEKDSQTLRDLEKELVDIEEKLVQKMRAYHRCERE.

Belongs to the SYCP2 family. As to quaternary structure, component of the lateral elements of synaptonemal complexes. Heterodimer with SYCP3. Interacts with SMC1A and SMC3. Interacts with TEX11. In terms of processing, phosphorylated. Detected in testis and spermatocytes (at protein level).

Its subcellular location is the nucleus. It localises to the chromosome. Functionally, major component of the axial/lateral elements of synaptonemal complexes (SCS) during meiotic prophase. Plays a role in the assembly of synaptonemal complexes. Required for normal meiotic chromosome synapsis during oocyte and spermatocyte development and for normal male and female fertility. Required for insertion of SYCP3 into synaptonemal complexes. May be involved in the organization of chromatin by temporarily binding to DNA scaffold attachment regions. Requires SYCP3, but not SYCP1, in order to be incorporated into the axial/lateral elements. This Mus musculus (Mouse) protein is Synaptonemal complex protein 2 (Sycp2).